A 382-amino-acid polypeptide reads, in one-letter code: ATP phosphoribosyltransferase regulatory subunit (382 aa).

The protein belongs to the class-II aminoacyl-tRNA synthetase family. HisZ subfamily. Heteromultimer composed of HisG and HisZ subunits.

Its subcellular location is the cytoplasm. The protein operates within amino-acid biosynthesis; L-histidine biosynthesis; L-histidine from 5-phospho-alpha-D-ribose 1-diphosphate: step 1/9. Functionally, required for the first step of histidine biosynthesis. May allow the feedback regulation of ATP phosphoribosyltransferase activity by histidine. In Burkholderia pseudomallei (strain K96243), this protein is ATP phosphoribosyltransferase regulatory subunit.